Reading from the N-terminus, the 356-residue chain is D-alanine--D-alanine ligase (356 aa).

The region spanning 134–339 (KQLFEHRGLP…YSDLITKLID (206 aa)) is the ATP-grasp domain. ATP is bound at residue 167-222 (KDKLTYPVFVKPANLGSSVGISKCNNEDELKSGIEEAFQFDRKLVIEQGINAREVE). Residues Asp293, Glu306, and Asn308 each contribute to the Mg(2+) site.

It belongs to the D-alanine--D-alanine ligase family. Mg(2+) is required as a cofactor. Mn(2+) serves as cofactor.

The protein resides in the cytoplasm. It catalyses the reaction 2 D-alanine + ATP = D-alanyl-D-alanine + ADP + phosphate + H(+). It functions in the pathway cell wall biogenesis; peptidoglycan biosynthesis. Functionally, cell wall formation. The protein is D-alanine--D-alanine ligase of Staphylococcus haemolyticus (strain JCSC1435).